The following is a 159-amino-acid chain: 2-C-methyl-D-erythritol 2,4-cyclodiphosphate synthase (159 aa).

The a divalent metal cation site is built by aspartate 8 and histidine 10. Residues 8 to 10 (DVH) and 34 to 35 (HS) each bind 4-CDP-2-C-methyl-D-erythritol 2-phosphate. Residue histidine 42 coordinates a divalent metal cation. 4-CDP-2-C-methyl-D-erythritol 2-phosphate is bound by residues 56-58 (DIG), 61-65 (FPDTD), 100-106 (AQAPKML), 132-135 (TTTE), phenylalanine 139, and arginine 142.

Belongs to the IspF family. Homotrimer. A divalent metal cation serves as cofactor.

It carries out the reaction 4-CDP-2-C-methyl-D-erythritol 2-phosphate = 2-C-methyl-D-erythritol 2,4-cyclic diphosphate + CMP. The protein operates within isoprenoid biosynthesis; isopentenyl diphosphate biosynthesis via DXP pathway; isopentenyl diphosphate from 1-deoxy-D-xylulose 5-phosphate: step 4/6. In terms of biological role, involved in the biosynthesis of isopentenyl diphosphate (IPP) and dimethylallyl diphosphate (DMAPP), two major building blocks of isoprenoid compounds. Catalyzes the conversion of 4-diphosphocytidyl-2-C-methyl-D-erythritol 2-phosphate (CDP-ME2P) to 2-C-methyl-D-erythritol 2,4-cyclodiphosphate (ME-CPP) with a corresponding release of cytidine 5-monophosphate (CMP). This chain is 2-C-methyl-D-erythritol 2,4-cyclodiphosphate synthase, found in Escherichia coli O127:H6 (strain E2348/69 / EPEC).